Here is a 419-residue protein sequence, read N- to C-terminus: UDP-N-acetylglucosamine 1-carboxyvinyltransferase (419 aa).

Position 22-23 (22-23 (KN)) interacts with phosphoenolpyruvate. Residue arginine 91 participates in UDP-N-acetyl-alpha-D-glucosamine binding. Catalysis depends on cysteine 115, which acts as the Proton donor. At cysteine 115 the chain carries 2-(S-cysteinyl)pyruvic acid O-phosphothioketal. UDP-N-acetyl-alpha-D-glucosamine is bound by residues 120–124 (RPVDL), 160–163 (KVSV), aspartate 305, and valine 327.

Belongs to the EPSP synthase family. MurA subfamily.

The protein localises to the cytoplasm. The enzyme catalyses phosphoenolpyruvate + UDP-N-acetyl-alpha-D-glucosamine = UDP-N-acetyl-3-O-(1-carboxyvinyl)-alpha-D-glucosamine + phosphate. Its pathway is cell wall biogenesis; peptidoglycan biosynthesis. Its function is as follows. Cell wall formation. Adds enolpyruvyl to UDP-N-acetylglucosamine. This Escherichia fergusonii (strain ATCC 35469 / DSM 13698 / CCUG 18766 / IAM 14443 / JCM 21226 / LMG 7866 / NBRC 102419 / NCTC 12128 / CDC 0568-73) protein is UDP-N-acetylglucosamine 1-carboxyvinyltransferase.